Reading from the N-terminus, the 494-residue chain is Glutamate--tRNA ligase (494 aa).

The short motif at Pro9–Thr19 is the 'HIGH' region element. The 'KMSKS' region motif lies at Lys250 to Arg254. Lys253 serves as a coordination point for ATP.

This sequence belongs to the class-I aminoacyl-tRNA synthetase family. Glutamate--tRNA ligase type 1 subfamily. Monomer.

It is found in the cytoplasm. It carries out the reaction tRNA(Glu) + L-glutamate + ATP = L-glutamyl-tRNA(Glu) + AMP + diphosphate. Catalyzes the attachment of glutamate to tRNA(Glu) in a two-step reaction: glutamate is first activated by ATP to form Glu-AMP and then transferred to the acceptor end of tRNA(Glu). The polypeptide is Glutamate--tRNA ligase (Pseudoalteromonas translucida (strain TAC 125)).